A 204-amino-acid polypeptide reads, in one-letter code: Large ribosomal subunit protein bL25 (204 aa).

The protein belongs to the bacterial ribosomal protein bL25 family. CTC subfamily. In terms of assembly, part of the 50S ribosomal subunit; part of the 5S rRNA/L5/L18/L25 subcomplex. Contacts the 5S rRNA. Binds to the 5S rRNA independently of L5 and L18.

Its function is as follows. This is one of the proteins that binds to the 5S RNA in the ribosome where it forms part of the central protuberance. In Bordetella bronchiseptica (strain ATCC BAA-588 / NCTC 13252 / RB50) (Alcaligenes bronchisepticus), this protein is Large ribosomal subunit protein bL25.